The chain runs to 389 residues: Nicotinate phosphoribosyltransferase (389 aa).

A Phosphohistidine; by autocatalysis modification is found at histidine 211.

Belongs to the NAPRTase family. Transiently phosphorylated on a His residue during the reaction cycle. Phosphorylation strongly increases the affinity for substrates and increases the rate of nicotinate D-ribonucleotide production. Dephosphorylation regenerates the low-affinity form of the enzyme, leading to product release.

It catalyses the reaction nicotinate + 5-phospho-alpha-D-ribose 1-diphosphate + ATP + H2O = nicotinate beta-D-ribonucleotide + ADP + phosphate + diphosphate. The protein operates within cofactor biosynthesis; NAD(+) biosynthesis; nicotinate D-ribonucleotide from nicotinate: step 1/1. Functionally, catalyzes the synthesis of beta-nicotinate D-ribonucleotide from nicotinate and 5-phospho-D-ribose 1-phosphate at the expense of ATP. The polypeptide is Nicotinate phosphoribosyltransferase (Desulforapulum autotrophicum (strain ATCC 43914 / DSM 3382 / VKM B-1955 / HRM2) (Desulfobacterium autotrophicum)).